The following is a 355-amino-acid chain: MDDNKKRALAAALGQIERQFGKGAVMRMGDHERQGIPAISTGSLGLDIALGIGGLPKGRIVEIYGPESSGKTTLTLSVIAEAQKNGATCAFVDAEHALDPEYAGKLGVNVDDLLVSQPDTGEQALEITDMLVRSNAVDVIIVDSVAALVPKAEIEGEMGDMHVGLQARLMSQALRKITGNIKNANCLVIFINQIRMKIGVMFGSPETTTGGNALKFYASVRLDIRRTGAVKEGDEVVGSETRVKIVKNKVSPPFRQAEFQILYGKGIYRNGEIIDLGVSQGLVEKSGAWYAYQGNKIGQGKANAAKYLAENPAIGAEIEKQIREKLLKAGAAAEAGKAAAAEADADDMADADAGY.

Glycine 65–threonine 72 contributes to the ATP binding site.

This sequence belongs to the RecA family.

The protein resides in the cytoplasm. In terms of biological role, can catalyze the hydrolysis of ATP in the presence of single-stranded DNA, the ATP-dependent uptake of single-stranded DNA by duplex DNA, and the ATP-dependent hybridization of homologous single-stranded DNAs. It interacts with LexA causing its activation and leading to its autocatalytic cleavage. The protein is Protein RecA of Pseudomonas putida (strain ATCC 47054 / DSM 6125 / CFBP 8728 / NCIMB 11950 / KT2440).